The sequence spans 352 residues: Mitochondrial hydrolase YKR070W (352 aa).

This sequence belongs to the HAD-like hydrolase superfamily.

It localises to the mitochondrion. The polypeptide is Mitochondrial hydrolase YKR070W (Saccharomyces cerevisiae (strain ATCC 204508 / S288c) (Baker's yeast)).